A 324-amino-acid chain; its full sequence is DNA-directed RNA polymerase subunit alpha (324 aa).

Residues 1 to 228 (MIEIQKPTIR…EHFNLFTDLS (228 aa)) form an alpha N-terminal domain (alpha-NTD) region. The tract at residues 245 to 324 (RNKLLDMTIE…STPKGEEEEK (80 aa)) is alpha C-terminal domain (alpha-CTD).

It belongs to the RNA polymerase alpha chain family. In terms of assembly, homodimer. The RNAP catalytic core consists of 2 alpha, 1 beta, 1 beta' and 1 omega subunit. When a sigma factor is associated with the core the holoenzyme is formed, which can initiate transcription.

The catalysed reaction is RNA(n) + a ribonucleoside 5'-triphosphate = RNA(n+1) + diphosphate. Its function is as follows. DNA-dependent RNA polymerase catalyzes the transcription of DNA into RNA using the four ribonucleoside triphosphates as substrates. This is DNA-directed RNA polymerase subunit alpha from Caldicellulosiruptor saccharolyticus (strain ATCC 43494 / DSM 8903 / Tp8T 6331).